Here is a 312-residue protein sequence, read N- to C-terminus: Elongation factor Ts (312 aa).

Positions 80 to 83 (TDFV) are involved in Mg(2+) ion dislocation from EF-Tu.

It belongs to the EF-Ts family.

The protein resides in the cytoplasm. In terms of biological role, associates with the EF-Tu.GDP complex and induces the exchange of GDP to GTP. It remains bound to the aminoacyl-tRNA.EF-Tu.GTP complex up to the GTP hydrolysis stage on the ribosome. This chain is Elongation factor Ts, found in Paramagnetospirillum magneticum (strain ATCC 700264 / AMB-1) (Magnetospirillum magneticum).